Consider the following 51-residue polypeptide: Small integral membrane protein 38 (51 aa).

A helical transmembrane segment spans residues 13 to 33 (PLLALLVVILLARLILWSCLG).

It is found in the membrane. The chain is Small integral membrane protein 38 from Homo sapiens (Human).